The sequence spans 356 residues: Retinoic acid-induced protein 3 (356 aa).

The Extracellular portion of the chain corresponds to 1–35; that stretch reads MTTPTTAPSGCRSDLDSRYHRLCDLAEGWGIALET. Residues 36-56 traverse the membrane as a helical segment; it reads LAAVGAVATVACMFALVFLIC. The Cytoplasmic segment spans residues 57–68; it reads KVQDSNKRKMLP. Residues 69–89 form a helical membrane-spanning segment; that stretch reads AQFLFLLGVLGVFGLTFAFII. At 90-101 the chain is on the extracellular side; sequence KLDGATGPTRFF. Residues 102–122 form a helical membrane-spanning segment; the sequence is LFGVLFAICFSCLLAHAFNLI. Over 123 to 131 the chain is Cytoplasmic; sequence KLVRGRKPL. A helical transmembrane segment spans residues 132–152; it reads SWLVILSLAVGFSLVQDVIAI. The Extracellular segment spans residues 153–178; sequence EYLVLTMNRTNVNVFSELPAPRRNED. N160 carries an N-linked (GlcNAc...) asparagine glycan. A helical membrane pass occupies residues 179–199; the sequence is FVMLLIYVLVLMVLTFFTSFL. At 200–214 the chain is on the cytoplasmic side; that stretch reads VFCGSFSGWKRHGFH. A helical transmembrane segment spans residues 215-235; sequence ICFTSFLSIAIWVAWIVLLLI. Over 236–244 the chain is Extracellular; that stretch reads PDIDRKWDD. Residues 245-265 form a helical membrane-spanning segment; it reads TILSTALVANGWVFLAFYILP. The Cytoplasmic segment spans residues 266–356; the sequence is EFRQLPRQRS…NDYEGRKGDS (91 aa). At S303 the chain carries Phosphoserine. 2 positions are modified to phosphotyrosine: Y318 and Y321. A disordered region spans residues 336-356; it reads IPRAQAPASPYNDYEGRKGDS. Phosphoserine is present on S344. Phosphotyrosine is present on residues Y346 and Y349.

Belongs to the G-protein coupled receptor 3 family. As to quaternary structure, interacts (via its transmembrane domain) with EGFR. In terms of processing, phosphorylated in two conserved double-tyrosine motifs, Tyr 318/Tyr-321 and Tyr-346/Tyr-349 by EGFR. Tyr-318 and Tyr-321 are the preferred residues responsible for EGFR-mediated GPRC5A phosphorylation. Expressed predominantly in normal fetal and adult lung. Almost undetectable or expressed at very low levels in other tissues.

The protein resides in the cell membrane. Functionally, orphan receptor. Could be involved in modulating differentiation and maintaining homeostasis of epithelial cells. This retinoic acid-inducible GPCR provides evidence for a possible interaction between retinoid and G-protein signaling pathways. Functions as a negative modulator of EGFR signaling. Acts as a lung tumor suppressor. The polypeptide is Retinoic acid-induced protein 3 (Gprc5a) (Mus musculus (Mouse)).